The following is a 340-amino-acid chain: Glycerol-3-phosphate dehydrogenase [NAD(P)+] (340 aa).

NADPH is bound by residues serine 13, tryptophan 14, and lysine 108. Residues lysine 108, glycine 139, and serine 141 each coordinate sn-glycerol 3-phosphate. Alanine 143 is an NADPH binding site. Sn-glycerol 3-phosphate contacts are provided by lysine 194, aspartate 247, serine 257, arginine 258, and asparagine 259. The active-site Proton acceptor is lysine 194. Arginine 258 is a binding site for NADPH. 2 residues coordinate NADPH: valine 282 and glutamate 284.

It belongs to the NAD-dependent glycerol-3-phosphate dehydrogenase family.

Its subcellular location is the cytoplasm. It carries out the reaction sn-glycerol 3-phosphate + NAD(+) = dihydroxyacetone phosphate + NADH + H(+). The enzyme catalyses sn-glycerol 3-phosphate + NADP(+) = dihydroxyacetone phosphate + NADPH + H(+). Its pathway is membrane lipid metabolism; glycerophospholipid metabolism. Its function is as follows. Catalyzes the reduction of the glycolytic intermediate dihydroxyacetone phosphate (DHAP) to sn-glycerol 3-phosphate (G3P), the key precursor for phospholipid synthesis. This chain is Glycerol-3-phosphate dehydrogenase [NAD(P)+], found in Streptococcus thermophilus (strain CNRZ 1066).